The following is a 92-amino-acid chain: Small ribosomal subunit protein uS19 (92 aa).

The tract at residues 73-92 (EFSPTRSFRGHAGAKNKGRK) is disordered. Residues 80-92 (FRGHAGAKNKGRK) show a composition bias toward basic residues.

The protein belongs to the universal ribosomal protein uS19 family.

In terms of biological role, protein S19 forms a complex with S13 that binds strongly to the 16S ribosomal RNA. This is Small ribosomal subunit protein uS19 from Christiangramia forsetii (strain DSM 17595 / CGMCC 1.15422 / KT0803) (Gramella forsetii).